The following is a 67-amino-acid chain: Guanine nucleotide-binding protein G(I)/G(S)/G(O) subunit gamma-13 (67 aa).

At cysteine 64 the chain carries Cysteine methyl ester. Residue cysteine 64 is the site of S-farnesyl cysteine attachment. Positions 65 to 67 are cleaved as a propeptide — removed in mature form; sequence TIL.

The protein belongs to the G protein gamma family. In terms of assembly, g proteins are composed of 3 units, alpha, beta and gamma.

The protein localises to the cell membrane. In terms of biological role, guanine nucleotide-binding proteins (G proteins) are involved as a modulator or transducer in various transmembrane signaling systems. The beta and gamma chains are required for the GTPase activity, for replacement of GDP by GTP, and for G protein-effector interaction. This is Guanine nucleotide-binding protein G(I)/G(S)/G(O) subunit gamma-13 (GNG13) from Homo sapiens (Human).